A 446-amino-acid polypeptide reads, in one-letter code: tRNA(Ile2) 2-agmatinylcytidine synthetase TiaS (446 aa).

It belongs to the TiaS family.

The protein resides in the cytoplasm. The enzyme catalyses cytidine(34) in tRNA(Ile2) + agmatine + ATP + H2O = 2-agmatinylcytidine(34) in tRNA(Ile2) + AMP + 2 phosphate + 2 H(+). Its function is as follows. ATP-dependent agmatine transferase that catalyzes the formation of 2-agmatinylcytidine (agm2C) at the wobble position (C34) of tRNA(Ile2), converting the codon specificity from AUG to AUA. This is tRNA(Ile2) 2-agmatinylcytidine synthetase TiaS from Cenarchaeum symbiosum (strain A).